Reading from the N-terminus, the 498-residue chain is Aspartyl/glutamyl-tRNA(Asn/Gln) amidotransferase subunit B (498 aa).

Belongs to the GatB/GatE family. GatB subfamily. As to quaternary structure, heterotrimer of A, B and C subunits.

The catalysed reaction is L-glutamyl-tRNA(Gln) + L-glutamine + ATP + H2O = L-glutaminyl-tRNA(Gln) + L-glutamate + ADP + phosphate + H(+). It carries out the reaction L-aspartyl-tRNA(Asn) + L-glutamine + ATP + H2O = L-asparaginyl-tRNA(Asn) + L-glutamate + ADP + phosphate + 2 H(+). In terms of biological role, allows the formation of correctly charged Asn-tRNA(Asn) or Gln-tRNA(Gln) through the transamidation of misacylated Asp-tRNA(Asn) or Glu-tRNA(Gln) in organisms which lack either or both of asparaginyl-tRNA or glutaminyl-tRNA synthetases. The reaction takes place in the presence of glutamine and ATP through an activated phospho-Asp-tRNA(Asn) or phospho-Glu-tRNA(Gln). The chain is Aspartyl/glutamyl-tRNA(Asn/Gln) amidotransferase subunit B from Erythrobacter litoralis (strain HTCC2594).